A 492-amino-acid polypeptide reads, in one-letter code: Probable ATP-citrate synthase subunit 2 (492 aa).

Position 24 is a phosphoserine (S24).

It in the N-terminal section; belongs to the succinate/malate CoA ligase beta subunit family. In the C-terminal section; belongs to the succinate/malate CoA ligase alpha subunit family. As to quaternary structure, composed of two subunits.

Its subcellular location is the cytoplasm. It is found in the nucleus. It carries out the reaction oxaloacetate + acetyl-CoA + ADP + phosphate = citrate + ATP + CoA. Functionally, ATP citrate-lyase is the primary enzyme responsible for the synthesis of cytosolic acetyl-CoA. Has a central role in de novo lipid synthesis. The polypeptide is Probable ATP-citrate synthase subunit 2 (Schizosaccharomyces pombe (strain 972 / ATCC 24843) (Fission yeast)).